The chain runs to 186 residues: MDEIQKQLDKSDQLMQKACTHTQIEFSKIRAGRAMPDMLDGISILYYNAMTPLNQVAAITTPDARTLVIKPWERKCIQEIEKAIVNSKLGLNPQNDGEVVRIIVPPLTEERRKDLVKQAKNEAEKGKISIRNIRKDIKETFKHLQKDGASEDTIKRAEEKLQNLTDKHIHNIDNLLTHKEAEILEV.

The protein belongs to the RRF family.

The protein resides in the cytoplasm. Responsible for the release of ribosomes from messenger RNA at the termination of protein biosynthesis. May increase the efficiency of translation by recycling ribosomes from one round of translation to another. This is Ribosome-recycling factor from Amoebophilus asiaticus (strain 5a2).